Here is a 1253-residue protein sequence, read N- to C-terminus: Cytoplasmic FMR1-interacting protein 2 (1253 aa).

K1037 bears the N6-acetyllysine mark.

The protein belongs to the CYFIP family. Component of the WAVE1 complex composed of ABI2, CYFIP2, BRK1, NCKAP1 and WASF1/WAVE1. Interacts with RAC1 (activated form) which causes the complex to dissociate, releasing activated WASF1. The complex can also be activated by NCK1. Interacts with SHANK3; the interaction mediates the association of SHANK3 with the WAVE1 complex. Interacts with FMR1; the interaction occurs in a RNA-dependent manner. Interacts with FXR1 and FXR2. Interacts with TMEM108 (via N-terminus); the interaction associates TMEM108 with the WAVE1 complex.

The protein resides in the cytoplasm. It is found in the nucleus. It localises to the perinuclear region. The protein localises to the synapse. Its subcellular location is the synaptosome. In terms of biological role, involved in T-cell adhesion and p53-dependent induction of apoptosis. Does not bind RNA. As component of the WAVE1 complex, required for BDNF-NTRK2 endocytic trafficking and signaling from early endosomes. The sequence is that of Cytoplasmic FMR1-interacting protein 2 from Pongo abelii (Sumatran orangutan).